Reading from the N-terminus, the 428-residue chain is Protein terminus (428 aa).

Residues 325-346 form a C3H1-type zinc finger; the sequence is CRRCRTQFSRRSKLHIHQKLRC.

In Drosophila melanogaster (Fruit fly), this protein is Protein terminus (term).